A 535-amino-acid polypeptide reads, in one-letter code: GMP synthase [glutamine-hydrolyzing] (535 aa).

The 194-residue stretch at 24-217 (KILIVDFGSQ…VRKVAGLTGD (194 aa)) folds into the Glutamine amidotransferase type-1 domain. Catalysis depends on Cys101, which acts as the Nucleophile. Catalysis depends on residues His191 and Glu193. The GMPS ATP-PPase domain occupies 218 to 410 (WTMRAFREEA…LGLPEIFVGR (193 aa)). 245-251 (SGGVDSS) contributes to the ATP binding site.

Homodimer.

The catalysed reaction is XMP + L-glutamine + ATP + H2O = GMP + L-glutamate + AMP + diphosphate + 2 H(+). It functions in the pathway purine metabolism; GMP biosynthesis; GMP from XMP (L-Gln route): step 1/1. Its function is as follows. Catalyzes the synthesis of GMP from XMP. The protein is GMP synthase [glutamine-hydrolyzing] of Nitrobacter winogradskyi (strain ATCC 25391 / DSM 10237 / CIP 104748 / NCIMB 11846 / Nb-255).